We begin with the raw amino-acid sequence, 101 residues long: Small ribosomal subunit protein uS14 (101 aa).

The protein belongs to the universal ribosomal protein uS14 family. Part of the 30S ribosomal subunit. Contacts proteins S3 and S10.

Functionally, binds 16S rRNA, required for the assembly of 30S particles and may also be responsible for determining the conformation of the 16S rRNA at the A site. The chain is Small ribosomal subunit protein uS14 from Caulobacter sp. (strain K31).